We begin with the raw amino-acid sequence, 354 residues long: Ferredoxin--NADP reductase 2 (354 aa).

FAD contacts are provided by T14, D33, Q41, Y46, A86, F121, D289, and T330.

The protein belongs to the ferredoxin--NADP reductase type 2 family. As to quaternary structure, homodimer. FAD is required as a cofactor.

It catalyses the reaction 2 reduced [2Fe-2S]-[ferredoxin] + NADP(+) + H(+) = 2 oxidized [2Fe-2S]-[ferredoxin] + NADPH. The sequence is that of Ferredoxin--NADP reductase 2 from Christiangramia forsetii (strain DSM 17595 / CGMCC 1.15422 / KT0803) (Gramella forsetii).